Reading from the N-terminus, the 329-residue chain is DNA-directed RNA polymerase subunit alpha (329 aa).

Positions Met-1–Arg-235 are alpha N-terminal domain (alpha-NTD). Residues Phe-249 to Glu-329 form an alpha C-terminal domain (alpha-CTD) region.

This sequence belongs to the RNA polymerase alpha chain family. In terms of assembly, homodimer. The RNAP catalytic core consists of 2 alpha, 1 beta, 1 beta' and 1 omega subunit. When a sigma factor is associated with the core the holoenzyme is formed, which can initiate transcription.

It carries out the reaction RNA(n) + a ribonucleoside 5'-triphosphate = RNA(n+1) + diphosphate. Functionally, DNA-dependent RNA polymerase catalyzes the transcription of DNA into RNA using the four ribonucleoside triphosphates as substrates. This chain is DNA-directed RNA polymerase subunit alpha, found in Salmonella choleraesuis (strain SC-B67).